The sequence spans 213 residues: Putative tRNA methyltransferase MPN_351 (213 aa).

This sequence belongs to the TrmK family.

Its subcellular location is the cytoplasm. The protein is Putative tRNA methyltransferase MPN_351 of Mycoplasma pneumoniae (strain ATCC 29342 / M129 / Subtype 1) (Mycoplasmoides pneumoniae).